A 1465-amino-acid polypeptide reads, in one-letter code: DNA polymerase III PolC-type (1465 aa).

The 157-residue stretch at 427–583 (YVVFDVETTG…YDAEATGRLL (157 aa)) folds into the Exonuclease domain.

The protein belongs to the DNA polymerase type-C family. PolC subfamily.

Its subcellular location is the cytoplasm. The catalysed reaction is DNA(n) + a 2'-deoxyribonucleoside 5'-triphosphate = DNA(n+1) + diphosphate. Its function is as follows. Required for replicative DNA synthesis. This DNA polymerase also exhibits 3' to 5' exonuclease activity. This Streptococcus pyogenes serotype M4 (strain MGAS10750) protein is DNA polymerase III PolC-type.